A 186-amino-acid chain; its full sequence is uncharacterized protein (186 aa).

To M.jannaschii MJ0208.

This is an uncharacterized protein from Methanocaldococcus jannaschii (strain ATCC 43067 / DSM 2661 / JAL-1 / JCM 10045 / NBRC 100440) (Methanococcus jannaschii).